The primary structure comprises 179 residues: Large ribosomal subunit protein uL5 (179 aa).

This sequence belongs to the universal ribosomal protein uL5 family. In terms of assembly, part of the 50S ribosomal subunit; part of the 5S rRNA/L5/L18/L25 subcomplex. Contacts the 5S rRNA and the P site tRNA. Forms a bridge to the 30S subunit in the 70S ribosome.

This is one of the proteins that bind and probably mediate the attachment of the 5S RNA into the large ribosomal subunit, where it forms part of the central protuberance. In the 70S ribosome it contacts protein S13 of the 30S subunit (bridge B1b), connecting the 2 subunits; this bridge is implicated in subunit movement. Contacts the P site tRNA; the 5S rRNA and some of its associated proteins might help stabilize positioning of ribosome-bound tRNAs. The chain is Large ribosomal subunit protein uL5 from Exiguobacterium sibiricum (strain DSM 17290 / CCUG 55495 / CIP 109462 / JCM 13490 / 255-15).